We begin with the raw amino-acid sequence, 494 residues long: uncharacterized protein (494 aa).

This sequence belongs to the TPP enzyme family.

This is an uncharacterized protein from Methanocaldococcus jannaschii (strain ATCC 43067 / DSM 2661 / JAL-1 / JCM 10045 / NBRC 100440) (Methanococcus jannaschii).